We begin with the raw amino-acid sequence, 73 residues long: Protein SlyX homolog (73 aa).

A disordered region spans residues 54–73 (LQQAESNAPAAPANERPPHY). Low complexity predominate over residues 57–67 (AESNAPAAPAN).

This sequence belongs to the SlyX family.

This Rhodopseudomonas palustris (strain BisA53) protein is Protein SlyX homolog.